Reading from the N-terminus, the 173-residue chain is NADH-ubiquinone oxidoreductase chain 6 (173 aa).

The next 6 helical transmembrane spans lie at 1–21, 27–47, 48–68, 87–107, 113–133, and 139–159; these read MTYFVLFLGLCFVLGGLAVAS, YGVVGLVLASIAGCGWLLSLG, VSFVSLVLFMVYLGGMLVVFV, VVGYGVSLITVLVVGVVVGGF, FGVITVDSVGMFSVRLDFGGV, and CGVGMFLVAGWGLLLTLFVVL.

It belongs to the complex I subunit 6 family.

Its subcellular location is the mitochondrion membrane. It carries out the reaction a ubiquinone + NADH + 5 H(+)(in) = a ubiquinol + NAD(+) + 4 H(+)(out). In terms of biological role, core subunit of the mitochondrial membrane respiratory chain NADH dehydrogenase (Complex I) that is believed to belong to the minimal assembly required for catalysis. Complex I functions in the transfer of electrons from NADH to the respiratory chain. The immediate electron acceptor for the enzyme is believed to be ubiquinone. This is NADH-ubiquinone oxidoreductase chain 6 (MT-ND6) from Alle alle (Dovekie).